A 66-amino-acid polypeptide reads, in one-letter code: Small ribosomal subunit protein bS21 (66 aa).

The disordered stretch occupies residues 47 to 66 (KAQEAARRKRKFARKRMYED). The segment covering 53-66 (RRKRKFARKRMYED) has biased composition (basic residues).

The protein belongs to the bacterial ribosomal protein bS21 family.

The sequence is that of Small ribosomal subunit protein bS21 from Rickettsia bellii (strain RML369-C).